The chain runs to 236 residues: Eukaryotic translation initiation factor 3 subunit J (236 aa).

The segment at 1-84 (MADDWESAAD…RLEEEAEAQR (84 aa)) is disordered. The segment covering 28 to 46 (GEDEDEDIKDSWEDEEEKK) has biased composition (acidic residues). Basic and acidic residues-rich tracts occupy residues 47–58 (DEEKPTKTEAPA) and 68–77 (AKLEQQARLE).

The protein belongs to the eIF-3 subunit J family. As to quaternary structure, component of the eukaryotic translation initiation factor 3 (eIF-3) complex. The eIF-3 complex interacts with pix.

The protein localises to the cytoplasm. Functionally, component of the eukaryotic translation initiation factor 3 (eIF-3) complex, which is involved in protein synthesis of a specialized repertoire of mRNAs and, together with other initiation factors, stimulates binding of mRNA and methionyl-tRNAi to the 40S ribosome. The eIF-3 complex specifically targets and initiates translation of a subset of mRNAs involved in cell proliferation. The protein is Eukaryotic translation initiation factor 3 subunit J of Drosophila yakuba (Fruit fly).